The sequence spans 182 residues: Probable nicotinate-nucleotide adenylyltransferase (182 aa).

Belongs to the NadD family.

The enzyme catalyses nicotinate beta-D-ribonucleotide + ATP + H(+) = deamido-NAD(+) + diphosphate. It participates in cofactor biosynthesis; NAD(+) biosynthesis; deamido-NAD(+) from nicotinate D-ribonucleotide: step 1/1. Functionally, catalyzes the reversible adenylation of nicotinate mononucleotide (NaMN) to nicotinic acid adenine dinucleotide (NaAD). This Aliarcobacter butzleri (strain RM4018) (Arcobacter butzleri) protein is Probable nicotinate-nucleotide adenylyltransferase.